Reading from the N-terminus, the 351-residue chain is Prohormone-2 (351 aa).

A signal peptide spans 1 to 21 (MMCDWVWLLLTLCSLLMIVQS). Propeptides lie at residues 22-177 (LPTN…QTQV) and 192-319 (ELDI…MISR). Residues 51–69 (GNQQNHQPENNPSSSYSST) are compositionally biased toward polar residues. Disordered stretches follow at residues 51–71 (GNQQNHQPENNPSSSYSSTAE) and 136–176 (NEDR…VQTQ). Over residues 136 to 145 (NEDRRKRSEK) the composition is skewed to basic and acidic residues. Residues 158–176 (PSTTSFQSPTSTQQSVQTQ) are compositionally biased toward low complexity.

The protein localises to the secreted. The polypeptide is Prohormone-2 (Apis mellifera (Honeybee)).